Here is a 324-residue protein sequence, read N- to C-terminus: Glyoxylate/hydroxypyruvate reductase B (324 aa).

Catalysis depends on residues arginine 237 and glutamate 266. Histidine 285 serves as the catalytic Proton donor.

Belongs to the D-isomer specific 2-hydroxyacid dehydrogenase family. GhrB subfamily. Homodimer.

Its subcellular location is the cytoplasm. It carries out the reaction glycolate + NADP(+) = glyoxylate + NADPH + H(+). The enzyme catalyses (R)-glycerate + NAD(+) = 3-hydroxypyruvate + NADH + H(+). It catalyses the reaction (R)-glycerate + NADP(+) = 3-hydroxypyruvate + NADPH + H(+). Catalyzes the NADPH-dependent reduction of glyoxylate and hydroxypyruvate into glycolate and glycerate, respectively. This is Glyoxylate/hydroxypyruvate reductase B from Salmonella paratyphi A (strain ATCC 9150 / SARB42).